Here is a 420-residue protein sequence, read N- to C-terminus: Serine hydroxymethyltransferase (420 aa).

(6S)-5,6,7,8-tetrahydrofolate-binding positions include Leu123 and 127 to 129 (GHL). N6-(pyridoxal phosphate)lysine is present on Lys232.

It belongs to the SHMT family. As to quaternary structure, homodimer. Requires pyridoxal 5'-phosphate as cofactor.

It is found in the cytoplasm. It catalyses the reaction (6R)-5,10-methylene-5,6,7,8-tetrahydrofolate + glycine + H2O = (6S)-5,6,7,8-tetrahydrofolate + L-serine. The protein operates within one-carbon metabolism; tetrahydrofolate interconversion. Its pathway is amino-acid biosynthesis; glycine biosynthesis; glycine from L-serine: step 1/1. Functionally, catalyzes the reversible interconversion of serine and glycine with tetrahydrofolate (THF) serving as the one-carbon carrier. This reaction serves as the major source of one-carbon groups required for the biosynthesis of purines, thymidylate, methionine, and other important biomolecules. Also exhibits THF-independent aldolase activity toward beta-hydroxyamino acids, producing glycine and aldehydes, via a retro-aldol mechanism. This Ehrlichia chaffeensis (strain ATCC CRL-10679 / Arkansas) protein is Serine hydroxymethyltransferase.